A 191-amino-acid polypeptide reads, in one-letter code: Orotate phosphoribosyltransferase (191 aa).

Residue 114 to 122 (EDVVTTGKS) coordinates 5-phospho-alpha-D-ribose 1-diphosphate. Orotate is bound by residues Thr118 and Arg146.

The protein belongs to the purine/pyrimidine phosphoribosyltransferase family. PyrE subfamily. As to quaternary structure, homodimer. It depends on Mg(2+) as a cofactor.

The catalysed reaction is orotidine 5'-phosphate + diphosphate = orotate + 5-phospho-alpha-D-ribose 1-diphosphate. Its pathway is pyrimidine metabolism; UMP biosynthesis via de novo pathway; UMP from orotate: step 1/2. Functionally, catalyzes the transfer of a ribosyl phosphate group from 5-phosphoribose 1-diphosphate to orotate, leading to the formation of orotidine monophosphate (OMP). The chain is Orotate phosphoribosyltransferase from Clostridium botulinum (strain Loch Maree / Type A3).